The following is a 624-amino-acid chain: DNA-directed RNA polymerase subunit gamma (624 aa).

Cys-70, Cys-72, Cys-85, and Cys-88 together coordinate Zn(2+). Mg(2+) is bound by residues Asp-466, Asp-468, and Asp-470.

It belongs to the RNA polymerase beta' chain family. RpoC1 subfamily. In cyanobacteria the RNAP catalytic core is composed of 2 alpha, 1 beta, 1 beta', 1 gamma and 1 omega subunit. When a sigma factor is associated with the core the holoenzyme is formed, which can initiate transcription. Requires Mg(2+) as cofactor. The cofactor is Zn(2+).

The catalysed reaction is RNA(n) + a ribonucleoside 5'-triphosphate = RNA(n+1) + diphosphate. In terms of biological role, DNA-dependent RNA polymerase catalyzes the transcription of DNA into RNA using the four ribonucleoside triphosphates as substrates. The chain is DNA-directed RNA polymerase subunit gamma from Synechococcus elongatus (strain ATCC 33912 / PCC 7942 / FACHB-805) (Anacystis nidulans R2).